A 417-amino-acid polypeptide reads, in one-letter code: Tryptophan synthase beta chain (417 aa).

Lysine 110 is subject to N6-(pyridoxal phosphate)lysine.

Belongs to the TrpB family. In terms of assembly, tetramer of two alpha and two beta chains. The cofactor is pyridoxal 5'-phosphate.

It catalyses the reaction (1S,2R)-1-C-(indol-3-yl)glycerol 3-phosphate + L-serine = D-glyceraldehyde 3-phosphate + L-tryptophan + H2O. It functions in the pathway amino-acid biosynthesis; L-tryptophan biosynthesis; L-tryptophan from chorismate: step 5/5. Functionally, the beta subunit is responsible for the synthesis of L-tryptophan from indole and L-serine. The protein is Tryptophan synthase beta chain of Prochlorococcus marinus (strain NATL1A).